We begin with the raw amino-acid sequence, 267 residues long: MLALEAAQLDGPHLSCLYPEGVFYDLDSCKPFSYPDSDGGLDSTWGWTEAPPAPAIAPYEAFDPATAAFSHSQTVQLCYSHGPNPSTYSPMGTLDPAPSLEAPGPGLQVYPPEDFTSQTLGSLAYAPYPSPVLSEEEDIMLDSPALEVSDSESDEALLAGSEGRGSEAGARKKLRLYQFLLGLLLRGDMRECVWWVEPGAGVFQFSSKHKELLARRWGQQKGNRKRMTYQKLARALRNYAKTGEIRKVKRKLTYQFDSALLPASRHV.

Residues 1-31 (MLALEAAQLDGPHLSCLYPEGVFYDLDSCKP) are TAD1 (Acidic). The TAD2 stretch occupies residues 41 to 62 (LDSTWGWTEAPPAPAIAPYEAF). Positions 174 to 257 (LRLYQFLLGL…VKRKLTYQFD (84 aa)) form a DNA-binding region, ETS.

Belongs to the ETS family. Can form homotypic interactions. Interacts with IRF4/Pip. Interacts with JUN. Interacts with TBP. May also interact with CREBBP and EP300. Interacts with NONO/p54(nrb). As to expression, expressed in the medulla of the thymus, the spleen and germinal centers of the lymph nodes. Expressed in B-cells and T-cells, expression increases during B-cell maturation and decreases during T-cell maturation.

The protein localises to the nucleus. Sequence specific transcriptional activator which binds to the PU-box, a purine-rich DNA sequence (5'-GAGGAA-3') that can act as a lymphoid-specific enhancer. Promotes development of plasmacytoid dendritic cells (pDCs), also known as type 2 DC precursors (pre-DC2) or natural interferon (IFN)-producing cells. These cells have the capacity to produce large amounts of interferon and block viral replication. Required for B-cell receptor (BCR) signaling, which is necessary for normal B-cell development and antigenic stimulation. This chain is Transcription factor Spi-B (Spib), found in Mus musculus (Mouse).